Reading from the N-terminus, the 244-residue chain is Probable transcriptional regulatory protein XF_1906 (244 aa).

It belongs to the TACO1 family.

It is found in the cytoplasm. In Xylella fastidiosa (strain 9a5c), this protein is Probable transcriptional regulatory protein XF_1906.